A 139-amino-acid polypeptide reads, in one-letter code: Maximins 4/H3 type 6 (139 aa).

Positions 1 to 18 (MNFKYIVAVSFLIASAYA) are cleaved as a signal peptide. Positions 19–43 (RSVQNDEQSLSQRDVLEEESLREIR) are excised as a propeptide. Asparagine 70 is subject to Asparagine amide. Residues 74–118 (TAEDHEVMKRLEAVMRDLDSLDHPEEASERETRGFNQDEIAKEKR) constitute a propeptide that is removed on maturation. Position 138 is an isoleucine amide (isoleucine 138).

This sequence belongs to the bombinin family. In terms of tissue distribution, expressed by the skin glands.

It is found in the secreted. Its function is as follows. Maximin-4 shows antibacterial activity against both Gram-positive and Gram-negative bacteria. It also shows antimicrobial activity against the fungus C.albicans, but not against A.flavus nor P.uticale. It has little hemolytic activity. It does not possess a significant cytotoxicity against tumor cell lines. It does not possess a significant anti-HIV activity. In terms of biological role, maximin-H3 shows antibacterial activity against both Gram-positive and Gram-negative bacteria. It also shows antimicrobial activity against the fungus C.albicans. Shows strong hemolytic activity. This is Maximins 4/H3 type 6 from Bombina maxima (Giant fire-bellied toad).